We begin with the raw amino-acid sequence, 356 residues long: Phosphate acyltransferase (356 aa).

This sequence belongs to the PlsX family. As to quaternary structure, homodimer. Probably interacts with PlsY.

It localises to the cytoplasm. It catalyses the reaction a fatty acyl-[ACP] + phosphate = an acyl phosphate + holo-[ACP]. The protein operates within lipid metabolism; phospholipid metabolism. Functionally, catalyzes the reversible formation of acyl-phosphate (acyl-PO(4)) from acyl-[acyl-carrier-protein] (acyl-ACP). This enzyme utilizes acyl-ACP as fatty acyl donor, but not acyl-CoA. This Mesorhizobium japonicum (strain LMG 29417 / CECT 9101 / MAFF 303099) (Mesorhizobium loti (strain MAFF 303099)) protein is Phosphate acyltransferase.